The sequence spans 275 residues: Large ribosomal subunit protein uL2 (275 aa).

A disordered region spans residues 222-275 (GVAMNPVDHPHGGGEGRNKGRHPTSPWGQKSKGLKTRNNKRTDSMIIRRRAKKK). The segment covering 229–239 (DHPHGGGEGRN) has biased composition (basic and acidic residues).

Belongs to the universal ribosomal protein uL2 family. Part of the 50S ribosomal subunit. Forms a bridge to the 30S subunit in the 70S ribosome.

Its function is as follows. One of the primary rRNA binding proteins. Required for association of the 30S and 50S subunits to form the 70S ribosome, for tRNA binding and peptide bond formation. It has been suggested to have peptidyltransferase activity; this is somewhat controversial. Makes several contacts with the 16S rRNA in the 70S ribosome. The sequence is that of Large ribosomal subunit protein uL2 from Psychrobacter arcticus (strain DSM 17307 / VKM B-2377 / 273-4).